Here is a 214-residue protein sequence, read N- to C-terminus: Pyridoxine/pyridoxamine 5'-phosphate oxidase (214 aa).

Substrate is bound by residues 11-14 (RREY) and Lys68. Residues 63–68 (RLVLLK), 78–79 (FT), Arg84, Lys85, and Gln107 each bind FMN. Residues Tyr125 and Arg129 each contribute to the substrate site. Residues 142-143 (QS) and Trp187 each bind FMN. A substrate-binding site is contributed by 193-195 (RLH). Arg197 lines the FMN pocket.

It belongs to the pyridoxamine 5'-phosphate oxidase family. In terms of assembly, homodimer. It depends on FMN as a cofactor.

The catalysed reaction is pyridoxamine 5'-phosphate + O2 + H2O = pyridoxal 5'-phosphate + H2O2 + NH4(+). It catalyses the reaction pyridoxine 5'-phosphate + O2 = pyridoxal 5'-phosphate + H2O2. Its pathway is cofactor metabolism; pyridoxal 5'-phosphate salvage; pyridoxal 5'-phosphate from pyridoxamine 5'-phosphate: step 1/1. It participates in cofactor metabolism; pyridoxal 5'-phosphate salvage; pyridoxal 5'-phosphate from pyridoxine 5'-phosphate: step 1/1. In terms of biological role, catalyzes the oxidation of either pyridoxine 5'-phosphate (PNP) or pyridoxamine 5'-phosphate (PMP) into pyridoxal 5'-phosphate (PLP). The sequence is that of Pyridoxine/pyridoxamine 5'-phosphate oxidase from Blochmanniella floridana.